The sequence spans 171 residues: Phosphinothricin N-acetyltransferase (171 aa).

The region spanning 7–171 (VQVRPGVEED…WDVAWYERPL (165 aa)) is the N-acetyltransferase domain. Acetyl-CoA is bound by residues 94 to 96 (VYV), 102 to 107 (GRGIGS), and Asn-133.

Belongs to the acetyltransferase family. PAT/BAR subfamily.

The catalysed reaction is phosphinothricin + acetyl-CoA = N-acetylphosphinothricin + CoA + H(+). Inactivates phosphinothricin (PPT) by transfer of an acetyl group from acetyl CoA. The physiological substrate could be a structurally related compound. The polypeptide is Phosphinothricin N-acetyltransferase (Streptomyces coelicolor (strain ATCC BAA-471 / A3(2) / M145)).